The sequence spans 219 residues: Probable nicotinate-nucleotide adenylyltransferase (219 aa).

It belongs to the NadD family.

The enzyme catalyses nicotinate beta-D-ribonucleotide + ATP + H(+) = deamido-NAD(+) + diphosphate. The protein operates within cofactor biosynthesis; NAD(+) biosynthesis; deamido-NAD(+) from nicotinate D-ribonucleotide: step 1/1. Its function is as follows. Catalyzes the reversible adenylation of nicotinate mononucleotide (NaMN) to nicotinic acid adenine dinucleotide (NaAD). The sequence is that of Probable nicotinate-nucleotide adenylyltransferase from Pseudoalteromonas atlantica (strain T6c / ATCC BAA-1087).